The chain runs to 142 residues: Large ribosomal subunit protein uL13 (142 aa).

Belongs to the universal ribosomal protein uL13 family. As to quaternary structure, part of the 50S ribosomal subunit.

Its function is as follows. This protein is one of the early assembly proteins of the 50S ribosomal subunit, although it is not seen to bind rRNA by itself. It is important during the early stages of 50S assembly. This chain is Large ribosomal subunit protein uL13, found in Pyrococcus furiosus (strain ATCC 43587 / DSM 3638 / JCM 8422 / Vc1).